Consider the following 145-residue polypeptide: Antimicrobial peptide NK-lysin (145 aa).

The first 22 residues, 1-22, serve as a signal peptide directing secretion; sequence MTSRALLLLASALLGTPGLTFS. Positions 23-62 are excised as a propeptide; sequence GLNPESYDLATAHLSDGEQFCQGLTQEDLQGDLLTERERQ. One can recognise a Saposin B-type domain in the interval 62–142; that stretch reads QGIACWSCRK…VDIKLCKHKA (81 aa). Intrachain disulfides connect Cys66–Cys138, Cys69–Cys132, and Cys97–Cys107. Positions 141–145 are excised as a propeptide; sequence KAGLI.

It is found in the secreted. In terms of biological role, may be an effector molecule of cytotoxic activity. Has antimicrobial activity. This Equus caballus (Horse) protein is Antimicrobial peptide NK-lysin (NKL).